Consider the following 676-residue polypeptide: Urocanate hydratase (676 aa).

NAD(+) is bound by residues 126 to 127, Q204, 251 to 253, E271, 317 to 318, 343 to 347, 354 to 355, and Y403; these read GG, GMS, NV, QTSCH, and YY. An N6-succinyllysine modification is found at K534. G594 lines the NAD(+) pocket.

The protein belongs to the urocanase family. NAD(+) serves as cofactor.

The enzyme catalyses 4-imidazolone-5-propanoate = trans-urocanate + H2O. Its pathway is amino-acid degradation; L-histidine degradation into L-glutamate; N-formimidoyl-L-glutamate from L-histidine: step 2/3. This chain is Urocanate hydratase (Uroc1), found in Mus musculus (Mouse).